Here is a 74-residue protein sequence, read N- to C-terminus: Cytochrome c oxidase copper chaperone 1 (74 aa).

The disordered stretch occupies residues 1-30 (MTDQPAQNGLIPPPTSEPSKAAASAETKPK). Cu cation contacts are provided by Cys-34 and Cys-35. A CHCH domain is found at 34–74 (CCACPDTKKLRDECIVEHGESACTKWIEAHKICLRAEGFNV). Short sequence motifs (cx9C motif) lie at residues 37-47 (CPDTKKLRDEC) and 56-66 (CTKWIEAHKIC). 2 disulfides stabilise this stretch: Cys-37/Cys-66 and Cys-47/Cys-56.

The protein belongs to the COX17 family.

It localises to the mitochondrion intermembrane space. Functionally, copper chaperone for cytochrome c oxidase (COX). Binds 2 copper ions and delivers them to the Cu(A) site of COX. Can complement the yeast mutant cox17. The sequence is that of Cytochrome c oxidase copper chaperone 1 (COX17-1) from Arabidopsis thaliana (Mouse-ear cress).